The following is a 266-amino-acid chain: Apolipoprotein A-I (266 aa).

The signal sequence occupies residues 1 to 18; that stretch reads MKAVVLTLAVLFLTGSQA. A run of 2 repeats spans residues 67–88 and 89–110. Residues 67-266 are 10 X approximate tandem repeats; it reads LKLLDNWDSL…DEATKKLNSQ (200 aa). Residue methionine 109 is modified to Methionine sulfoxide. The 3; half-length repeat unit spans residues 111-121; that stretch reads KDLEEVKKKVQ. 5 consecutive repeat copies span residues 122–143, 144–165, 166–187, 188–209, and 210–231. A 9; half-length repeat occupies 232–242; sequence PALEDLRQGLL. Repeat 10 spans residues 243 to 266; that stretch reads PVLENFRDSLLAAVDEATKKLNSQ.

It belongs to the apolipoprotein A1/A4/E family. Homodimer. Interacts with APOA1BP and CLU. Component of a sperm activating protein complex (SPAP), consisting of APOA1, an immunoglobulin heavy chain, an immunoglobulin light chain and albumin. Interacts with NDRG1. Interacts with SCGB3A2. Interacts with NAXE and YJEFN3. Post-translationally, glycosylated. In terms of processing, palmitoylated. Phosphorylation sites are present in the extracellular medium.

It localises to the secreted. Its function is as follows. Participates in the reverse transport of cholesterol from tissues to the liver for excretion by promoting cholesterol efflux from tissues and by acting as a cofactor for the lecithin cholesterol acyltransferase (LCAT). As part of the SPAP complex, activates spermatozoa motility. This Neomonachus schauinslandi (Hawaiian monk seal) protein is Apolipoprotein A-I (APOA1).